Consider the following 353-residue polypeptide: Dihydroorotate dehydrogenase (quinone) (353 aa).

Residues 67–71 and T91 contribute to the FMN site; that span reads AGFDK. K71 provides a ligand contact to substrate. Residue 116-120 coordinates substrate; sequence NRMGF. Residues N144 and N177 each coordinate FMN. Position 177 (N177) interacts with substrate. Residue S180 is the Nucleophile of the active site. A substrate-binding site is contributed by N182. The FMN site is built by K213 and T241. Residue 242 to 243 coordinates substrate; the sequence is NT. FMN contacts are provided by residues G265, G294, and 315 to 316; that span reads YT.

This sequence belongs to the dihydroorotate dehydrogenase family. Type 2 subfamily. As to quaternary structure, monomer. FMN is required as a cofactor.

It localises to the cell membrane. It carries out the reaction (S)-dihydroorotate + a quinone = orotate + a quinol. The protein operates within pyrimidine metabolism; UMP biosynthesis via de novo pathway; orotate from (S)-dihydroorotate (quinone route): step 1/1. In terms of biological role, catalyzes the conversion of dihydroorotate to orotate with quinone as electron acceptor. In Mycobacteroides abscessus (strain ATCC 19977 / DSM 44196 / CCUG 20993 / CIP 104536 / JCM 13569 / NCTC 13031 / TMC 1543 / L948) (Mycobacterium abscessus), this protein is Dihydroorotate dehydrogenase (quinone).